Reading from the N-terminus, the 470-residue chain is Serine carboxypeptidase ctsa-4.1 (470 aa).

The N-terminal stretch at 1–19 (MKLLSILFIFVSSYSFCLA) is a signal peptide. An N-linked (GlcNAc...) asparagine glycan is attached at N132. Residue S169 is part of the active site. Residue N316 is glycosylated (N-linked (GlcNAc...) asparagine). Residue D380 is part of the active site. N396 carries N-linked (GlcNAc...) asparagine glycosylation. Residue H441 is part of the active site.

The protein belongs to the peptidase S10 family.

The catalysed reaction is Release of a C-terminal amino acid with broad specificity.. This chain is Serine carboxypeptidase ctsa-4.1, found in Caenorhabditis elegans.